Consider the following 524-residue polypeptide: Probable aminopeptidase NPEPL1 (524 aa).

Zn(2+)-binding residues include Lys260 and Asp265. Lys272 is an active-site residue. Zn(2+)-binding residues include Asp283, Asp342, and Glu344. Arg346 is a catalytic residue.

It belongs to the peptidase M17 family. Zn(2+) serves as cofactor. Mn(2+) is required as a cofactor.

Its function is as follows. Probably catalyzes the removal of unsubstituted N-terminal amino acids from various peptides. The sequence is that of Probable aminopeptidase NPEPL1 (Npepl1) from Mus musculus (Mouse).